The following is a 335-amino-acid chain: Probable cyclin-H (335 aa).

This sequence belongs to the cyclin family. Cyclin C subfamily.

The protein localises to the nucleus. Its function is as follows. Regulates CDK7, the catalytic subunit of the CDK-activating kinase (CAK) enzymatic complex. The sequence is that of Probable cyclin-H (CYCH) from Echinococcus multilocularis (Fox tapeworm).